The primary structure comprises 802 residues: Leucine--tRNA ligase (802 aa).

Residues 39 to 50 (PYPSGAGLHVGH) carry the 'HIGH' region motif. Residues 574–578 (KMSKS) carry the 'KMSKS' region motif. Lys-577 is a binding site for ATP.

The protein belongs to the class-I aminoacyl-tRNA synthetase family.

The protein localises to the cytoplasm. It catalyses the reaction tRNA(Leu) + L-leucine + ATP = L-leucyl-tRNA(Leu) + AMP + diphosphate. In Macrococcus caseolyticus (strain JCSC5402) (Macrococcoides caseolyticum), this protein is Leucine--tRNA ligase.